Reading from the N-terminus, the 124-residue chain is Small ribosomal subunit protein uS12 (124 aa).

Residues 1-25 (MARINQLVRKPRRARAKKSDVPALE) form a disordered region. Aspartate 89 is modified (3-methylthioaspartic acid). The disordered stretch occupies residues 103-124 (DTAGVSGRRRGRSKYGEKKPKE).

Belongs to the universal ribosomal protein uS12 family. As to quaternary structure, part of the 30S ribosomal subunit. Contacts proteins S8 and S17. May interact with IF1 in the 30S initiation complex.

Its function is as follows. With S4 and S5 plays an important role in translational accuracy. Interacts with and stabilizes bases of the 16S rRNA that are involved in tRNA selection in the A site and with the mRNA backbone. Located at the interface of the 30S and 50S subunits, it traverses the body of the 30S subunit contacting proteins on the other side and probably holding the rRNA structure together. The combined cluster of proteins S8, S12 and S17 appears to hold together the shoulder and platform of the 30S subunit. The sequence is that of Small ribosomal subunit protein uS12 from Coxiella burnetii (strain Dugway 5J108-111).